We begin with the raw amino-acid sequence, 384 residues long: Sodium channel protein Nach (384 aa).

Topologically, residues 1-319 (AAFAYFSGFM…LVSHLGSAFS (319 aa)) are extracellular. N32 and N215 each carry an N-linked (GlcNAc...) asparagine glycan. Residues 320-340 (LFVGMSMLSLVEIIYYFTVIL) traverse the membrane as a helical segment. Topologically, residues 341–384 (RRNYVQECRARQKLQTLHRRPNFGWPGDKNSNQQKSVFYIRGRN) are cytoplasmic.

This sequence belongs to the amiloride-sensitive sodium channel (TC 1.A.6) family.

The protein localises to the membrane. Its function is as follows. Part of a complex that plays a role in tracheal liquid clearance. Probable role in sodium transport. The polypeptide is Sodium channel protein Nach (Nach) (Drosophila virilis (Fruit fly)).